The chain runs to 152 residues: SsrA-binding protein (152 aa).

The span at 129-140 shows a compositional bias: basic and acidic residues; it reads KREDMKKKDSQR. Residues 129 to 152 are disordered; the sequence is KREDMKKKDSQRELSQALKSKNRE. A compositionally biased stretch (polar residues) spans 141–152; that stretch reads ELSQALKSKNRE.

Belongs to the SmpB family.

The protein resides in the cytoplasm. Required for rescue of stalled ribosomes mediated by trans-translation. Binds to transfer-messenger RNA (tmRNA), required for stable association of tmRNA with ribosomes. tmRNA and SmpB together mimic tRNA shape, replacing the anticodon stem-loop with SmpB. tmRNA is encoded by the ssrA gene; the 2 termini fold to resemble tRNA(Ala) and it encodes a 'tag peptide', a short internal open reading frame. During trans-translation Ala-aminoacylated tmRNA acts like a tRNA, entering the A-site of stalled ribosomes, displacing the stalled mRNA. The ribosome then switches to translate the ORF on the tmRNA; the nascent peptide is terminated with the 'tag peptide' encoded by the tmRNA and targeted for degradation. The ribosome is freed to recommence translation, which seems to be the essential function of trans-translation. This chain is SsrA-binding protein, found in Pelobacter propionicus (strain DSM 2379 / NBRC 103807 / OttBd1).